The primary structure comprises 349 residues: Anthranilate phosphoribosyltransferase (349 aa).

Residues Gly-82, 85–86, 92–95, 110–118, and Ser-122 contribute to the 5-phospho-alpha-D-ribose 1-diphosphate site; these read GD, NVST, and KHGNRGVSS. Gly-82 is an anthranilate binding site. Position 94 (Ser-94) interacts with Mg(2+). Asn-113 contacts anthranilate. Anthranilate is bound at residue Arg-168. Positions 227 and 228 each coordinate Mg(2+).

The protein belongs to the anthranilate phosphoribosyltransferase family. Homodimer. It depends on Mg(2+) as a cofactor.

The catalysed reaction is N-(5-phospho-beta-D-ribosyl)anthranilate + diphosphate = 5-phospho-alpha-D-ribose 1-diphosphate + anthranilate. It functions in the pathway amino-acid biosynthesis; L-tryptophan biosynthesis; L-tryptophan from chorismate: step 2/5. Functionally, catalyzes the transfer of the phosphoribosyl group of 5-phosphorylribose-1-pyrophosphate (PRPP) to anthranilate to yield N-(5'-phosphoribosyl)-anthranilate (PRA). This chain is Anthranilate phosphoribosyltransferase, found in Acinetobacter baumannii (strain ATCC 17978 / DSM 105126 / CIP 53.77 / LMG 1025 / NCDC KC755 / 5377).